The following is a 510-amino-acid chain: Probable RNA-binding protein 46 (510 aa).

Positions 23-42 (ENGQRKFGGPPPGWEGPPPP) are disordered. Pro residues predominate over residues 31-42 (GPPPGWEGPPPP). RRM domains lie at 45–123 (REVF…VSLD), 125–207 (CRLF…WAEP), and 220–292 (RVLY…LAKP).

In terms of tissue distribution, expressed in the testis and ovary.

Its subcellular location is the cytoplasm. Functionally, essential for male and female fertility, playing a crucial role in regulating germ cell development by ensuring the proper progression of meiosis prophase I. The sequence is that of Probable RNA-binding protein 46 (rbm46) from Danio rerio (Zebrafish).